We begin with the raw amino-acid sequence, 616 residues long: Chaperone protein HscA (616 aa).

It belongs to the heat shock protein 70 family.

Functionally, chaperone involved in the maturation of iron-sulfur cluster-containing proteins. Has a low intrinsic ATPase activity which is markedly stimulated by HscB. Involved in the maturation of IscU. This chain is Chaperone protein HscA, found in Salmonella enteritidis PT4 (strain P125109).